The chain runs to 365 residues: Outer capsid protein sigma-3 (365 aa).

Residues 51-73 (CMHCLGVVGSLQRKLKHLPHHRC) form a CCHC-type zinc finger.

Belongs to the orthoreovirus sigma-3 protein family. In terms of assembly, heterohexamer of three sigma-3 and three Mu-1 proteins. The RNA-binding form is probably a homodimer. Post-translationally, cleaved during virus the endosomal proteolytic disassembly of the outer capsid.

The protein resides in the virion. Functionally, stimulates translation by blocking the activation of the dsRNA-dependent protein kinase EIF2AK2/PKR, thereby inhibiting the host interferon response. Sigma3 prevents the activation of EIF2AK2 by competing with the kinase for dsRNA-binding. The viral outer shell polypeptides, of which sigma-3 is one, impose structural constraints that prevent elongation of nascent transcripts by the RNA-dependent RNA polymerase lambda-3. The chain is Outer capsid protein sigma-3 (S4) from Mammalia (T1L).